The sequence spans 286 residues: Pyridoxal kinase PdxY (286 aa).

Residues Ser-9 and 44–45 (TQ) contribute to the substrate site. ATP contacts are provided by residues Asp-111, Ala-143, Glu-148, Lys-181, and 208–211 (RPLV). Residue Asp-223 coordinates substrate.

Belongs to the pyridoxine kinase family. PdxY subfamily. As to quaternary structure, homodimer. The cofactor is Mg(2+).

It carries out the reaction pyridoxal + ATP = pyridoxal 5'-phosphate + ADP + H(+). It functions in the pathway cofactor metabolism; pyridoxal 5'-phosphate salvage; pyridoxal 5'-phosphate from pyridoxal: step 1/1. In terms of biological role, pyridoxal kinase involved in the salvage pathway of pyridoxal 5'-phosphate (PLP). Catalyzes the phosphorylation of pyridoxal to PLP. This chain is Pyridoxal kinase PdxY, found in Yersinia pestis bv. Antiqua (strain Antiqua).